The chain runs to 563 residues: GTPase Obg (563 aa).

The 167-residue stretch at 2–168 (SDFVDRVTVH…RDVILELKSI (167 aa)) folds into the Obg domain. The 181-residue stretch at 169 to 349 (ADVALVGFPS…LNWALADLVT (181 aa)) folds into the OBG-type G domain. GTP is bound by residues 175 to 182 (GFPSAGKS), 200 to 204 (FTTLV), 221 to 224 (DVPG), 301 to 304 (NKVD), and 330 to 332 (STA). Residues Ser182 and Thr202 each coordinate Mg(2+). Residues 383 to 469 (DEGGNALDFT…DRAVEFDWDP (87 aa)) enclose the OCT domain. A disordered region spans residues 525 to 563 (MMAERKAGHWADPSVDDDRHDETSLFGRGETADDEDVEQ).

Belongs to the TRAFAC class OBG-HflX-like GTPase superfamily. OBG GTPase family. In terms of assembly, monomer. The cofactor is Mg(2+).

Its subcellular location is the cytoplasm. Its function is as follows. An essential GTPase which binds GTP, GDP and possibly (p)ppGpp with moderate affinity, with high nucleotide exchange rates and a fairly low GTP hydrolysis rate. Plays a role in control of the cell cycle, stress response, ribosome biogenesis and in those bacteria that undergo differentiation, in morphogenesis control. This Bifidobacterium adolescentis (strain ATCC 15703 / DSM 20083 / NCTC 11814 / E194a) protein is GTPase Obg.